The following is a 181-amino-acid chain: Translationally-controlled tumor protein homolog (181 aa).

The region spanning Met1 to Gln181 is the TCTP domain.

This sequence belongs to the TCTP family.

The protein resides in the cytoplasm. Functionally, involved in calcium binding and microtubule stabilization. The sequence is that of Translationally-controlled tumor protein homolog from Brugia malayi (Filarial nematode worm).